A 520-amino-acid chain; its full sequence is 2-methylcitrate dehydratase, mitochondrial (520 aa).

The N-terminal 37 residues, 1–37, are a transit peptide targeting the mitochondrion; sequence MRAFRSAANFGAASNIYRKSFTPASIASNRFVSARMS.

It belongs to the PrpD family. As to quaternary structure, monomer.

The protein localises to the mitochondrion. It catalyses the reaction (2S,3S)-2-methylcitrate = 2-methyl-cis-aconitate + H2O. It functions in the pathway organic acid metabolism; propanoate degradation. Several bivalent metal ions, such as nickel, copper, zinc, mercury, and lead, inhibit the activity to some extent. Inhibited by structural analogs such as citrate, cis-aconitate, isocitrate, 2-methylisocitrate, tricarballylate and fluorocitrate, but not by trans-aconitate or adipate. Functionally, component of the methylcitrate cycle that catalyzes the dehydration of 2-methylcitrate to 2-methyl-cis-aconitate. The methylcitrate cycle is a metabolic pathway for the consumption of propionic acid. The chain is 2-methylcitrate dehydratase, mitochondrial from Yarrowia lipolytica (strain CLIB 122 / E 150) (Yeast).